Reading from the N-terminus, the 62-residue chain is KEGYAMDHEGCKFSCFIRPSGFCDGYCKTHLKASSGYCAWPACYCYGVPSNIKVWDYATNKC.

An LCN-type CS-alpha/beta domain is found at 1 to 62 (KEGYAMDHEG…KVWDYATNKC (62 aa)). 4 disulfides stabilise this stretch: Cys11–Cys62, Cys15–Cys38, Cys23–Cys43, and Cys27–Cys45.

Belongs to the long (4 C-C) scorpion toxin superfamily. Sodium channel inhibitor family. Beta subfamily. As to expression, expressed by the venom gland.

It localises to the secreted. Its function is as follows. Beta toxins bind voltage-independently at site-4 of sodium channels (Nav) and shift the voltage of activation toward more negative potentials thereby affecting sodium channel activation and promoting spontaneous and repetitive firing. This toxin is active against both mammals and insects. This is Toxin Tb2-II from Tityus bahiensis (Brazilian scorpion).